A 196-amino-acid polypeptide reads, in one-letter code: Heat shock protein beta-8 (196 aa).

A disordered region spans residues 1–28 (MADGQLPFPCSYPSRLRRDPFRDSPLSS). Residues Ser24 and Ser57 each carry the phosphoserine modification. The residue at position 63 (Thr63) is a Phosphothreonine. Asymmetric dimethylarginine occurs at positions 71 and 78. The sHSP domain maps to 78–185 (RFGVPAEGRS…PFGESSFNNE (108 aa)). At Ser87 the chain carries Phosphoserine. The interval 176 to 196 (PFGESSFNNELPQDNQEVTCS) is disordered. The span at 178-196 (GESSFNNELPQDNQEVTCS) shows a compositional bias: polar residues.

This sequence belongs to the small heat shock protein (HSP20) family. In terms of assembly, monomer. Forms a ternary complex with BAG3 and HSPA1A. Component of the chaperone-assisted selective autophagy (CASA) complex consisting of BAG3, HSPA8/HSC70, HSPB8 and STUB1/CHIP. Interacts with HSPB1. Interacts with DNAJB6. Interacts with BAG3. In terms of tissue distribution, highly expressed in skeletal muscle, heart, uterus, liver, lung and ovary. Low levels found in stomach and brain. Not detected in small intestine, large intestine, kidney, spleen and testis. In the ovary, expression is concentrated in the endometrium and in the connective tissue between the circular and longitudinal muscles of the myometrium.

Its subcellular location is the cytoplasm. The protein resides in the nucleus. Functionally, involved in the chaperone-assisted selective autophagy (CASA), a crucial process for protein quality control, particularly in mechanical strained cells and tissues such as muscle. Displays temperature-dependent chaperone activity. The chain is Heat shock protein beta-8 (Hspb8) from Mus musculus (Mouse).